The following is a 242-amino-acid chain: MSTSTPTSTALIGSTGLVGSHILSTLLTSPTTSSQVQTISRRAPANPTNSSRLSPTVNADTSTWPTLLSSLVPLPTTVISSLGTTRVAAGGIANQWKIDHDLNVDLAKAAKQAGVKNFVFISSAGTRGALSTKVPYSQMKRGVEDTIQSLDFEHGIILRPGLILGEREKAQHAGQGLLYGLVRGLGRWVSLGVQDRFAQEAEVIARAAVKAAKMAEEGKAPGKWWVLEQDEIVKLGREEWKE.

Residues 1-87 (MSTSTPTSTA…VISSLGTTRV (87 aa)) constitute a mitochondrion transit peptide. The tract at residues 33-58 (SSQVQTISRRAPANPTNSSRLSPTVN) is disordered. Positions 35–58 (QVQTISRRAPANPTNSSRLSPTVN) are enriched in polar residues.

This sequence belongs to the FMP52 family.

The protein resides in the mitochondrion outer membrane. In Neurospora crassa (strain ATCC 24698 / 74-OR23-1A / CBS 708.71 / DSM 1257 / FGSC 987), this protein is Protein fmp-52, mitochondrial (fmp-52).